A 276-amino-acid chain; its full sequence is MRVLETIVALREYRKSLEESVGFVPTMGALHKGHQSLIERSLKENSHTIVSVFVNPTQFGANEDFNAYPRPLEKDLALCEKLGVNAVFVPKIGEMYPYEAEQRLKLYAPKFLSSSLEGAMRKGHFDGVVQIVLKMFHLVNPTRAYFGKKDAQQLLIIEHLVKDLLLDIEIAPCEIVRDDDNLALSSRNVYLNATQRKQALAIPKALEKIQQAIDKGEKACEKLKKLGLEILETLEVDYLECCNHKLEPLTIIEPTNTLILVAARVGKTRLLDNLWV.

ATP is bound at residue 27 to 34 (MGALHKGH). Residue H34 is the Proton donor of the active site. Q58 provides a ligand contact to (R)-pantoate. Residue Q58 coordinates beta-alanine. ATP is bound at residue 147–150 (GKKD). Position 153 (Q153) interacts with (R)-pantoate. Residues V176 and 184-187 (LSSR) each bind ATP.

Belongs to the pantothenate synthetase family. Homodimer.

It is found in the cytoplasm. The catalysed reaction is (R)-pantoate + beta-alanine + ATP = (R)-pantothenate + AMP + diphosphate + H(+). It functions in the pathway cofactor biosynthesis; (R)-pantothenate biosynthesis; (R)-pantothenate from (R)-pantoate and beta-alanine: step 1/1. Its function is as follows. Catalyzes the condensation of pantoate with beta-alanine in an ATP-dependent reaction via a pantoyl-adenylate intermediate. The polypeptide is Pantothenate synthetase (Helicobacter pylori (strain ATCC 700392 / 26695) (Campylobacter pylori)).